A 275-amino-acid chain; its full sequence is Small ribosomal subunit protein uS2 (275 aa).

The segment at 226 to 275 (AAAPNSASVREEEFSAEAGDEGKGRRAPAKKATEKKADAPAAAPEAPAAE) is disordered. The segment covering 264 to 275 (APAAAPEAPAAE) has biased composition (low complexity).

The protein belongs to the universal ribosomal protein uS2 family.

The sequence is that of Small ribosomal subunit protein uS2 from Xanthomonas campestris pv. campestris (strain 8004).